The sequence spans 89 residues: Large ribosomal subunit protein bL27 (89 aa).

The segment at 1–22 is disordered; it reads MAHKKAGGSSRNGRDSESKRLG.

Belongs to the bacterial ribosomal protein bL27 family.

The chain is Large ribosomal subunit protein bL27 from Brucella abortus (strain S19).